A 289-amino-acid polypeptide reads, in one-letter code: ATP synthase gamma chain (289 aa).

The protein belongs to the ATPase gamma chain family. In terms of assembly, F-type ATPases have 2 components, CF(1) - the catalytic core - and CF(0) - the membrane proton channel. CF(1) has five subunits: alpha(3), beta(3), gamma(1), delta(1), epsilon(1). CF(0) has three main subunits: a, b and c.

The protein resides in the cell inner membrane. In terms of biological role, produces ATP from ADP in the presence of a proton gradient across the membrane. The gamma chain is believed to be important in regulating ATPase activity and the flow of protons through the CF(0) complex. The protein is ATP synthase gamma chain of Cereibacter sphaeroides (strain ATCC 17029 / ATH 2.4.9) (Rhodobacter sphaeroides).